Consider the following 510-residue polypeptide: Cytochrome P450 monooxygenase macH (510 aa).

Residues 7–29 form a helical membrane-spanning segment; sequence LPVSLWLIAAGTFAVYHAIRAVY. Cys454 serves as a coordination point for heme.

Belongs to the cytochrome P450 family. Heme is required as a cofactor.

It is found in the membrane. It functions in the pathway secondary metabolite biosynthesis; terpenoid biosynthesis. Its function is as follows. Cytochrome P450 monooxygenase; part of the gene cluster that mediates the biosynthesis of macrophorins, isoprenoid epoxycyclohexenones containing cyclized drimane moieties. The first step of the pathway is the synthesis of 6-methylsalicylic acid (6-MSA) by the polyketide synthase macA. 6-MSA is then converted to m-cresol by the decarboxylase macB. The cytochrome P450 monooxygenase macC then catalyzes the oxidation of m-cresol to toluquinol. Epoxidation of toluquinol is then performed by the short chain dehydrogenase macD, with the help of macE, and a further prenylation by macG leads to 7-deacetoxyyanuthone A. The next step is the hydroxylation of C-22 of 7-deacetoxyyanuthone A by the cytochrome P450 monooxygenase macH to yield 22-deacetylyanuthone A. O-Mevalon transferase macI then attaches mevalon to the hydroxyl group of 22-deacetylyanuthone A to produce yanuthone E. The terpene cyclase macJ catalyzes the cyclization of 22-deacetylyanuthone A to macrophorin A. MacJ is also able to catalyze cyclization of yanuthone E and 7-deacetoxyyanuthone A to their corresponding macrophorins. The macJ products can be further modified by macH and macJ, as well as by the FAD-dependent monooxygenase macF, to produce additional macrophorins, including 4'-oxomacrophorin A, 4'-oxomacrophorin D and 4'-oxomacrophorin E. The sequence is that of Cytochrome P450 monooxygenase macH from Penicillium terrestre.